Reading from the N-terminus, the 318-residue chain is MALKQLRIGTRASQLALWQANWVKSELEQRYPGMEVSLVKIKTIGDKILDVPLAQVGGKGLFVKEIEEAMLRGDIDIAVHSMKDVPTEFPEGLGLHCITEREDPRDAVISRGTKFADLPQGAKIGTSALRRQAQLLKVRPDMEMVIIRGNVETRINKLETEKLDAVILAAAGLKRLGFTEKVAEYLPTDLSIPAIGQGALGIECRLDNEEVKQTIDFFNHPATAYAVRAERALLWRCEGGCQVPIAAFGEVTGSDLKLVGFIASVDGKTSVRGTITGPAADCEKLGIKLAEQLLADGGHAILAEVYQREVSREKEIPV.

An S-(dipyrrolylmethanemethyl)cysteine modification is found at cysteine 241.

This sequence belongs to the HMBS family. As to quaternary structure, monomer. The cofactor is dipyrromethane.

It catalyses the reaction 4 porphobilinogen + H2O = hydroxymethylbilane + 4 NH4(+). The protein operates within porphyrin-containing compound metabolism; protoporphyrin-IX biosynthesis; coproporphyrinogen-III from 5-aminolevulinate: step 2/4. Functionally, tetrapolymerization of the monopyrrole PBG into the hydroxymethylbilane pre-uroporphyrinogen in several discrete steps. The chain is Porphobilinogen deaminase from Geotalea daltonii (strain DSM 22248 / JCM 15807 / FRC-32) (Geobacter daltonii).